The chain runs to 548 residues: Chaperonin GroEL 2 (548 aa).

ATP is bound by residues 30 to 33, Lys-51, 87 to 91, Gly-415, 479 to 481, and Asp-495; these read TLGP, DGTTT, and NAA. The segment at 524 to 548 is disordered; that stretch reads APKDAPPTAPAGVPGAGAGGPGFDF. The segment covering 537–548 has biased composition (gly residues); it reads PGAGAGGPGFDF.

The protein belongs to the chaperonin (HSP60) family. In terms of assembly, forms a cylinder of 14 subunits composed of two heptameric rings stacked back-to-back. Interacts with the co-chaperonin GroES.

It is found in the cytoplasm. It carries out the reaction ATP + H2O + a folded polypeptide = ADP + phosphate + an unfolded polypeptide.. Together with its co-chaperonin GroES, plays an essential role in assisting protein folding. The GroEL-GroES system forms a nano-cage that allows encapsulation of the non-native substrate proteins and provides a physical environment optimized to promote and accelerate protein folding. The polypeptide is Chaperonin GroEL 2 (Burkholderia pseudomallei (strain 668)).